The primary structure comprises 391 residues: Coiled-coil domain-containing protein 85C-A (391 aa).

Coiled-coil stretches lie at residues 23–87 (KCSK…ELCC) and 121–146 (FQQKLKELESNQDSVMRENLELKEII). Residues 154–212 (NGAGSRSSIDSQSSLSNLNGGSATVRDVGDGSSTSSTGSAGSPDHHHSHIHKPTEGKIT) are disordered. 2 stretches are compositionally biased toward low complexity: residues 158–175 (SRSSIDSQSSLSNLNGGS) and 183–195 (DGSSTSSTGSAGS).

Belongs to the CCDC85 family.

Its subcellular location is the cell junction. The protein resides in the tight junction. The protein localises to the adherens junction. Functionally, may play a role in cell-cell adhesion and epithelium development through its interaction with proteins of the beta-catenin family. May play an important role in cortical development, especially in the maintenance of radial glia. This is Coiled-coil domain-containing protein 85C-A (ccdc85ca) from Danio rerio (Zebrafish).